Consider the following 741-residue polypeptide: Phosphoribosylformylglycinamidine synthase subunit PurL (741 aa).

Histidine 53 is an active-site residue. Residues tyrosine 56 and lysine 95 each coordinate ATP. Glutamate 97 is a binding site for Mg(2+). Residues 98–101 (SHNH) and arginine 120 contribute to the substrate site. Histidine 99 serves as the catalytic Proton acceptor. Position 121 (aspartate 121) interacts with Mg(2+). Glutamine 244 contacts substrate. Aspartate 274 lines the Mg(2+) pocket. 318–320 (ESQ) provides a ligand contact to substrate. ATP is bound by residues aspartate 501 and glycine 538. Position 539 (asparagine 539) interacts with Mg(2+). Serine 541 is a substrate binding site.

Belongs to the FGAMS family. Monomer. Part of the FGAM synthase complex composed of 1 PurL, 1 PurQ and 2 PurS subunits.

The protein localises to the cytoplasm. It catalyses the reaction N(2)-formyl-N(1)-(5-phospho-beta-D-ribosyl)glycinamide + L-glutamine + ATP + H2O = 2-formamido-N(1)-(5-O-phospho-beta-D-ribosyl)acetamidine + L-glutamate + ADP + phosphate + H(+). Its pathway is purine metabolism; IMP biosynthesis via de novo pathway; 5-amino-1-(5-phospho-D-ribosyl)imidazole from N(2)-formyl-N(1)-(5-phospho-D-ribosyl)glycinamide: step 1/2. In terms of biological role, part of the phosphoribosylformylglycinamidine synthase complex involved in the purines biosynthetic pathway. Catalyzes the ATP-dependent conversion of formylglycinamide ribonucleotide (FGAR) and glutamine to yield formylglycinamidine ribonucleotide (FGAM) and glutamate. The FGAM synthase complex is composed of three subunits. PurQ produces an ammonia molecule by converting glutamine to glutamate. PurL transfers the ammonia molecule to FGAR to form FGAM in an ATP-dependent manner. PurS interacts with PurQ and PurL and is thought to assist in the transfer of the ammonia molecule from PurQ to PurL. This Latilactobacillus sakei subsp. sakei (strain 23K) (Lactobacillus sakei subsp. sakei) protein is Phosphoribosylformylglycinamidine synthase subunit PurL.